A 98-amino-acid chain; its full sequence is Small ribosomal subunit protein uS19 (98 aa).

Disordered stretches follow at residues 1–30 and 78–98; these read MARS…KKSV and RTFH…PAKK. Over residues 9 to 24 the composition is skewed to basic and acidic residues; it reads PFADKHLTKKVEDANK.

The protein belongs to the universal ribosomal protein uS19 family.

In terms of biological role, protein S19 forms a complex with S13 that binds strongly to the 16S ribosomal RNA. This Anaeromyxobacter dehalogenans (strain 2CP-C) protein is Small ribosomal subunit protein uS19.